The primary structure comprises 224 residues: Aminopyrimidine aminohydrolase (224 aa).

Asp44 provides a ligand contact to substrate. Cys135 (nucleophile) is an active-site residue. Residues Tyr139 and Tyr165 each contribute to the substrate site. Glu207 (proton donor) is an active-site residue.

This sequence belongs to the TenA family. As to quaternary structure, homotetramer.

The catalysed reaction is 4-amino-5-aminomethyl-2-methylpyrimidine + H2O = 4-amino-5-hydroxymethyl-2-methylpyrimidine + NH4(+). It carries out the reaction thiamine + H2O = 5-(2-hydroxyethyl)-4-methylthiazole + 4-amino-5-hydroxymethyl-2-methylpyrimidine + H(+). It participates in cofactor biosynthesis; thiamine diphosphate biosynthesis. Functionally, catalyzes an amino-pyrimidine hydrolysis reaction at the C5' of the pyrimidine moiety of thiamine compounds, a reaction that is part of a thiamine salvage pathway. Thus, catalyzes the conversion of 4-amino-5-aminomethyl-2-methylpyrimidine to 4-amino-5-hydroxymethyl-2-methylpyrimidine (HMP). To a lesser extent, is also able to catalyze the hydrolytic cleavage of thiamine; however, this thiaminase activity is unlikely to be physiologically relevant. Therefore, is involved in the regeneration of the thiamine pyrimidine from thiamine degraded products present in the environment, rather than in thiamine degradation. The protein is Aminopyrimidine aminohydrolase of Halalkalibacterium halodurans (strain ATCC BAA-125 / DSM 18197 / FERM 7344 / JCM 9153 / C-125) (Bacillus halodurans).